A 374-amino-acid polypeptide reads, in one-letter code: Peptide chain release factor 2 (374 aa).

Glutamine 249 carries the post-translational modification N5-methylglutamine.

The protein belongs to the prokaryotic/mitochondrial release factor family. Post-translationally, methylated by PrmC. Methylation increases the termination efficiency of RF2.

The protein localises to the cytoplasm. Its function is as follows. Peptide chain release factor 2 directs the termination of translation in response to the peptide chain termination codons UGA and UAA. The chain is Peptide chain release factor 2 from Ruegeria sp. (strain TM1040) (Silicibacter sp.).